The sequence spans 72 residues: UPF0154 protein BLi02038/BL02936 (72 aa).

A helical membrane pass occupies residues 4–24 (WVVILVGVLALLAGVALGFFI).

It belongs to the UPF0154 family.

The protein resides in the cell membrane. This Bacillus licheniformis (strain ATCC 14580 / DSM 13 / JCM 2505 / CCUG 7422 / NBRC 12200 / NCIMB 9375 / NCTC 10341 / NRRL NRS-1264 / Gibson 46) protein is UPF0154 protein BLi02038/BL02936.